The primary structure comprises 262 residues: Caffeyl-CoA reductase-Etf complex subunit CarD (262 aa).

This sequence belongs to the ETF beta-subunit/FixA family. As to quaternary structure, part of the homotrimeric caffeyl-CoA reductase-Etf complex composed of (R)-2-hydroxyisocaproyl-CoA dehydratase CarC, and the electron transfer flavoprotein (ETF) alpha (CarE) and beta (CarD) subunits. Requires FAD as cofactor. AMP serves as cofactor.

It is found in the cytoplasm. The catalysed reaction is hydrocaffeoyl-CoA + 2 reduced [2Fe-2S]-[ferredoxin] + 2 NAD(+) = (E)-caffeoyl-CoA + 2 oxidized [2Fe-2S]-[ferredoxin] + 2 NADH. Its function is as follows. Caffeyl-CoA reductase-Etf complex catalyzes the reduction of caffeyl-CoA to yield hydrocaffeyl-CoA. It couples the endergonic ferredoxin reduction with NADH as reductant to the exergonic reduction of caffeoyl-CoA with the same reductant. It uses the mechanism of electron bifurcation to overcome the steep energy barrier in ferredoxin reduction. The electron transfer flavoprotein (Etf) mediates the electron transfer between the different donors and acceptors. The complex can also reduce 4-coumaroyl-CoA and feruloyl-CoA. In Acetobacterium woodii (strain ATCC 29683 / DSM 1030 / JCM 2381 / KCTC 1655 / WB1), this protein is Caffeyl-CoA reductase-Etf complex subunit CarD.